Here is a 104-residue protein sequence, read N- to C-terminus: Pyrimidine/purine nucleoside phosphorylase (104 aa).

Belongs to the nucleoside phosphorylase PpnP family.

The enzyme catalyses a purine D-ribonucleoside + phosphate = a purine nucleobase + alpha-D-ribose 1-phosphate. It catalyses the reaction adenosine + phosphate = alpha-D-ribose 1-phosphate + adenine. The catalysed reaction is cytidine + phosphate = cytosine + alpha-D-ribose 1-phosphate. It carries out the reaction guanosine + phosphate = alpha-D-ribose 1-phosphate + guanine. The enzyme catalyses inosine + phosphate = alpha-D-ribose 1-phosphate + hypoxanthine. It catalyses the reaction thymidine + phosphate = 2-deoxy-alpha-D-ribose 1-phosphate + thymine. The catalysed reaction is uridine + phosphate = alpha-D-ribose 1-phosphate + uracil. It carries out the reaction xanthosine + phosphate = alpha-D-ribose 1-phosphate + xanthine. Catalyzes the phosphorolysis of diverse nucleosides, yielding D-ribose 1-phosphate and the respective free bases. Can use uridine, adenosine, guanosine, cytidine, thymidine, inosine and xanthosine as substrates. Also catalyzes the reverse reactions. This Pelobacter propionicus (strain DSM 2379 / NBRC 103807 / OttBd1) protein is Pyrimidine/purine nucleoside phosphorylase.